Reading from the N-terminus, the 289-residue chain is Protoheme IX farnesyltransferase (289 aa).

9 consecutive transmembrane segments (helical) span residues 9-29 (VALMKLRVVELLLITTVPVMM), 35-55 (MPSLWLIAVTLVAGTLAAGSA), 89-109 (LTFGIVIGIVSTLMFGLLVNW), 110-130 (PSALLADGAIAFYVFVYTLGL), 138-158 (IVIGGAAGCFPVLIGWSAVTG), 164-184 (AVLLFAVVFFWTPPHFWALAM), 188-208 (DDYAAAGIPMLPVVAPVEVVT), 228-248 (VAHTGPVYLVSAVVVGAWFLA), and 269-289 (FHMSITYLTLLFVAIAVTAVV).

Belongs to the UbiA prenyltransferase family. Protoheme IX farnesyltransferase subfamily.

It is found in the cell membrane. The enzyme catalyses heme b + (2E,6E)-farnesyl diphosphate + H2O = Fe(II)-heme o + diphosphate. The protein operates within porphyrin-containing compound metabolism; heme O biosynthesis; heme O from protoheme: step 1/1. In terms of biological role, converts heme B (protoheme IX) to heme O by substitution of the vinyl group on carbon 2 of heme B porphyrin ring with a hydroxyethyl farnesyl side group. This chain is Protoheme IX farnesyltransferase, found in Frankia alni (strain DSM 45986 / CECT 9034 / ACN14a).